Consider the following 267-residue polypeptide: MKKILLLLVLIVAVLNFGKTIVTTINPYYLIVSQLLGDTASVKLLVPPGANPHLFSLKPSDAKTLEEADLIVANGLGLEPYLEKYREKTVFVSDFIPALLLIDDNPHIWLDPFFLKYYIVPGLYQVLIEKFPEKQSEIKQKAEEIVSGLDTVIRDSFKALLPYTGKTVVMAHPSFTYFFKEFGLELITLSSGHEHSTSFSTIKEILRKKEQIVALFREPQQPAEILSSLEKELRMKSFVLDPLGVNGEKTIVELLRKNLSVIQEALK.

Residues 1–15 (MKKILLLLVLIVAVL) form the signal peptide. A divalent metal cation contacts are provided by H53, H107, and H172.

This sequence belongs to the bacterial solute-binding protein 9 family.

It localises to the periplasm. Functionally, part of an ATP-binding cassette (ABC) transport system involved in metal import. Binds a metal with high affinity and specificity and delivers it to the membrane permease for translocation into the cytoplasm. The polypeptide is Putative metal-binding protein TM_0123 (Thermotoga maritima (strain ATCC 43589 / DSM 3109 / JCM 10099 / NBRC 100826 / MSB8)).